Here is a 407-residue protein sequence, read N- to C-terminus: Cathepsin D (407 aa).

The N-terminal stretch at 1–20 (MQTPGVLLLILGLLDASSSA) is a signal peptide. The propeptide at 21 to 64 (LIRIPLRKFTSIRRTMTEVGGSVEDLILKGPITKYSMQSSPRTK) is activation peptide. The 324-residue stretch at 79-402 (YYGEIGIGTP…DREYNRVGFA (324 aa)) folds into the Peptidase A1 domain. 2 disulfides stabilise this stretch: Cys-91–Cys-160 and Cys-110–Cys-117. The active site involves Asp-97. Asn-134 and Asn-258 each carry an N-linked (GlcNAc...) asparagine glycan. Cys-281 and Cys-285 are joined by a disulfide. Asp-290 is an active-site residue. Cysteines 324 and 361 form a disulfide.

It belongs to the peptidase A1 family. In terms of assembly, occurs as a mixture of both a single chain form and two types of two chain (light and heavy) forms. Interacts with ADAM30; this leads to activation of CTSD. N- and O-glycosylated. Post-translationally, undergoes proteolytic cleavage and activation by ADAM30.

The protein localises to the lysosome. It is found in the melanosome. Its subcellular location is the secreted. It localises to the extracellular space. The enzyme catalyses Specificity similar to, but narrower than, that of pepsin A. Does not cleave the 4-Gln-|-His-5 bond in B chain of insulin.. Its function is as follows. Acid protease active in intracellular protein breakdown. Plays a role in APP processing following cleavage and activation by ADAM30 which leads to APP degradation. This Rattus norvegicus (Rat) protein is Cathepsin D (Ctsd).